Consider the following 493-residue polypeptide: MECQRCPASARNPATVESRKEKFCDECFIKFVSTKQRKQMMKDEYFRNLFKVIYPFEKEGSVSKILLPLSLSDSGSLVMLDIVHDLLLEQTKQHNNRTGFTVDVLTVFTEENVSVIKERMESLINEKMSQLNKISNIFNVHFIDVNEFFNNASEVSTFIIDNENFEIFSKSKSVDDSNILTLKEILGKYCLNNSSRSDLISIIKTQLIKHFAYENGYNAIMWGHSMTKLSEVIISLVVKGKGSQIATFLDSESFDTLNNKPCKYKNLYPMKDLLSVEIESFLQIRNLAQFLINVEETNVKPNCLIARKSLPSLGQQKLVKNMTINEITNKYFQDIQNDYSNIISTVLRTADKLTQPKSSMAKPSQCQICQSKIYTNPSNWLNRITVTSPYPVETTEEKYLFKQWQDSKLGQSHTHYVELLNEIKQGASNSLDVEDGDVKLCYGCLILLNTSIKDKNLVWPKVDTMDITANATNNNKELSQILDQFEINSDGEE.

A Phosphoserine modification is found at Ser489.

It belongs to the CTU2/NCS2 family. As to quaternary structure, interacts with NCS6 and URM1. May act by forming a heterodimer with NCS6.

It localises to the cytoplasm. It participates in tRNA modification; 5-methoxycarbonylmethyl-2-thiouridine-tRNA biosynthesis. In terms of biological role, plays a central role in 2-thiolation of mcm(5)S(2)U at tRNA wobble positions of tRNA(Lys), tRNA(Glu) and tRNA(Gln). May act by forming a heterodimer with NCS6 that ligates sulfur from thiocarboxylated URM1 onto the uridine of tRNAs at wobble position. Prior mcm(5) tRNA modification by the elongator complex is required for 2-thiolation. May also be involved in protein urmylation. This is Cytoplasmic tRNA 2-thiolation protein 2 from Saccharomyces cerevisiae (strain RM11-1a) (Baker's yeast).